A 332-amino-acid chain; its full sequence is Putative pumilio homolog 20 (332 aa).

The PUM-HD domain maps to 1-332 (MAHQLRFAAA…NIASILNSIR (332 aa)). Pumilio repeat units follow at residues 89-124 (SDPDYFLMIARNMNGSKRIQKLLGKTDDVDALFAAA) and 125-159 (ILRRFLHIITDKYASYVVRRGMTVFDKKKKKAMYE). Residues 160-191 (HILHYASHIARDKHGNLALNDIITDAYRNKLF) form a Pumilio 3; degenerate repeat. 3 Pumilio repeats span residues 192 to 228 (DVIAHKALVLSNDAYGNFVIQRVLKLNDLRSKNNIVV), 229 to 266 (SLRGHFVDLSFQKYGSYVVDVLLETKESMVVVVEELME), and 267 to 303 (CEGDMLMRLARNEYGNFLVCKALRVTQKEMVRTDLFW).

Its subcellular location is the cytoplasm. Sequence-specific RNA-binding protein that regulates translation and mRNA stability by binding the 3'-UTR of target mRNAs. The sequence is that of Putative pumilio homolog 20 (APUM20) from Arabidopsis thaliana (Mouse-ear cress).